The sequence spans 1941 residues: Myosin light chain kinase, smooth muscle (1941 aa).

2 Ig-like C2-type domains span residues 33-122 (PAFI…VELT) and 156-244 (PKFA…AELS). Residues cysteine 177 and cysteine 228 are joined by a disulfide bond. A Phosphotyrosine; by ABL1 modification is found at tyrosine 226. The tract at residues 255–329 (AVRGTKAPSP…RKVPQSSILQ (75 aa)) is disordered. The span at 286-305 (NCPSPQRSGSSARATNSHLK) shows a compositional bias: polar residues. A Phosphoserine modification is found at serine 295. The segment covering 306–320 (SPQEPKPKLCEDAPR) has biased composition (basic and acidic residues). Phosphoserine occurs at positions 333 and 355. 4 Ig-like C2-type domains span residues 402 to 485 (PRFE…GQVS), 502 to 587 (PSFS…ATVT), 611 to 699 (PIFL…AVLT), and 709 to 809 (PWFI…APPR). 2 disulfides stabilise this stretch: cysteine 423-cysteine 475 and cysteine 523-cysteine 571. Position 452 is a phosphotyrosine; by ABL1 and SRC (tyrosine 452). Cysteines 730 and 793 form a disulfide. A Phosphotyrosine; by ABL1 modification is found at tyrosine 780. 4 repeat units span residues 856-883 (DVRG…VGQL), 884-911 (DFRD…AEQM), 912-939 (DFRA…PQQV), and 940-966 (DFRS…AATP). A 5 X 28 AA approximate tandem repeats region spans residues 856–985 (DVRGLLKRRV…KKSPSENGGN (130 aa)). The tract at residues 911 to 951 (MDFRANLQRQVKPKTISEEERKVHSPQQVDFRSVLAKKGTP) is actin-binding (calcium/calmodulin-sensitive). The tract at residues 920–1120 (QVKPKTISEE…KRPESQGSAP (201 aa)) is disordered. Serine 935 is subject to Phosphoserine. Positions 936-951 (PQQVDFRSVLAKKGTP) are calmodulin-binding. The 1-5; truncated repeat unit spans residues 967-985 (DFRSVLGGKKKSPSENGGN). 5 repeat units span residues 990–1002 (LNVK…TPAG), 1003–1014 (DAQAIGALKPVG), 1015–1026 (NAKPAETPKPIG), 1027–1038 (NAKPTETLKPVG), and 1039–1049 (NTKPAETLKPI). The segment at 990 to 1049 (LNVKAGESPTPAGDAQAIGALKPVGNAKPAETPKPIGNAKPTETLKPVGNTKPAETLKPI) is 5 X 12 AA approximate tandem repeats. The interval 1048–1482 (PIANAQPSGS…TVTVNTEQKV (435 aa)) is actin-binding (calcium/calmodulin-insensitive). Positions 1052 to 1065 (AQPSGSLKPVTNAQ) are enriched in polar residues. Residues 1085–1099 (AGKEEVKEVKNDVNC) are compositionally biased toward basic and acidic residues. In terms of domain architecture, Ig-like C2-type 7 spans 1120 to 1208 (PVFKEKLQDV…GQAECSCQVT (89 aa)). An intrachain disulfide couples cysteine 1141 to cysteine 1192. Positions 1212 to 1257 (AQTSENTKAPEMKSRRPKSSLPPVLGTESDATVKKKPAPKTPTKAA) are disordered. One can recognise an Ig-like C2-type 8 domain in the interval 1260–1348 (PQIIQFPEDQ…GSRQAQVNLT (89 aa)). The region spanning 1356 to 1449 (PAGTPCASDI…ESELTAVGEK (94 aa)) is the Fibronectin type-III domain. The interval 1435 to 1469 (SEPSQESELTAVGEKPEEPKDEVEVSDDDEKEPEV) is disordered. Acidic residues predominate over residues 1453–1467 (PKDEVEVSDDDEKEP). Serine 1460 carries the phosphoserine modification. Tyrosine 1471 is subject to Phosphotyrosine; by ABL1. The Protein kinase domain maps to 1486–1741 (YDIEERLGSG…CTQCLQHPWL (256 aa)). ATP is bound by residues 1492 to 1500 (LGSGKFGQV) and lysine 1515. Tyrosine 1597 carries the post-translational modification Phosphotyrosine; by ABL1. Aspartate 1607 acts as the Proton acceptor in catalysis. Residue tyrosine 1657 is modified to Phosphotyrosine; by ABL1. Residues 1733-1796 (TQCLQHPWLM…SGLSGRKSST (64 aa)) form a calmodulin-binding region. Residues serine 1781, serine 1782, serine 1794, serine 1795, and serine 1798 each carry the phosphoserine modification. The interval 1789–1809 (LSGRKSSTGSPTSPINAEKLE) is disordered. The span at 1792-1803 (RKSSTGSPTSPI) shows a compositional bias: polar residues. At threonine 1800 the chain carries Phosphothreonine. A Phosphoserine modification is found at serine 1801. The 90-residue stretch at 1831–1920 (PYFSKTIRDL…GEATCTAELI (90 aa)) folds into the Ig-like C2-type 9 domain. A disulfide bridge connects residues cysteine 1852 and cysteine 1904.

The protein belongs to the protein kinase superfamily. CAMK Ser/Thr protein kinase family. As to quaternary structure, all isoforms including Telokin bind calmodulin. Interacts with CTTN; this interaction is reduced during thrombin-induced endothelial cell (EC) contraction but is promoted by the barrier-protective agonist sphingosine 1-phosphate (S1P) within lamellipodia. A complex made of ABL1, CTTN and MYLK regulates cortical actin-based cytoskeletal rearrangement critical to sphingosine 1-phosphate (S1P)-mediated endothelial cell (EC) barrier enhancement. Binds to NAA10/ARD1. Interacts with SVIL and PTK2B/PYK2. Mg(2+) serves as cofactor. The cofactor is Ca(2+). In terms of processing, can probably be down-regulated by phosphorylation. Tyrosine phosphorylation by ABL1 increases kinase activity, reverses MLCK-mediated inhibition of Arp2/3-mediated actin polymerization, and enhances CTTN-binding. Phosphorylation by SRC at Tyr-452 promotes CTTN binding. The C-terminus is deglutamylated by AGTPBP1/CCP1, AGBL1/CCP4 and AGBL4/CCP6, leading to the formation of Myosin light chain kinase, smooth muscle, deglutamylated form. The consequences of C-terminal deglutamylation are unknown. As to expression, smooth muscle isoform is expressed in all tissues with highest levels in bladder, uterus, vas deferens, colon, ileum, and tracheae. Isoform 1 is expressed in lung, bladder, and vas deferens. Telokin is expressed in smooth muscle cells of the gut, reproductive tract and urinary tract, including in uterus, vas deferens, bladder, colon, kidney, ureter and ovary. Telokin is also detected in the trachea.

The protein resides in the cytoplasm. Its subcellular location is the cell projection. It is found in the lamellipodium. It localises to the cleavage furrow. The protein localises to the cytoskeleton. The protein resides in the stress fiber. The enzyme catalyses L-seryl-[myosin light chain] + ATP = O-phospho-L-seryl-[myosin light chain] + ADP + H(+). The catalysed reaction is L-threonyl-[myosin light chain] + ATP = O-phospho-L-threonyl-[myosin light chain] + ADP + H(+). Calcium/calmodulin-dependent myosin light chain kinase implicated in smooth muscle contraction via phosphorylation of myosin light chains (MLC). Also regulates actin-myosin interaction through a non-kinase activity. Phosphorylates PTK2B/PYK2 and myosin light-chains. Involved in the inflammatory response (e.g. apoptosis, vascular permeability, leukocyte diapedesis), cell motility and morphology, airway hyperreactivity and other activities relevant to asthma. Required for tonic airway smooth muscle contraction that is necessary for physiological and asthmatic airway resistance. Necessary for gastrointestinal motility. Implicated in the regulation of endothelial as well as vascular permeability, probably via the regulation of cytoskeletal rearrangements. In the nervous system it has been shown to control the growth initiation of astrocytic processes in culture and to participate in transmitter release at synapses formed between cultured sympathetic ganglion cells. Critical participant in signaling sequences that result in fibroblast apoptosis. Plays a role in the regulation of epithelial cell survival. Required for epithelial wound healing, especially during actomyosin ring contraction during purse-string wound closure. Mediates RhoA-dependent membrane blebbing. Triggers TRPC5 channel activity in a calcium-dependent signaling, by inducing its subcellular localization at the plasma membrane. Promotes cell migration (including tumor cells) and tumor metastasis. PTK2B/PYK2 activation by phosphorylation mediates ITGB2 activation and is thus essential to trigger neutrophil transmigration during acute lung injury (ALI). May regulate optic nerve head astrocyte migration. Probably involved in mitotic cytoskeletal regulation. Regulates tight junction probably by modulating ZO-1 exchange in the perijunctional actomyosin ring. Mediates burn-induced microvascular barrier injury; triggers endothelial contraction in the development of microvascular hyperpermeability by phosphorylating MLC. Essential for intestinal barrier dysfunction. Mediates Giardia spp.-mediated reduced epithelial barrier function during giardiasis intestinal infection via reorganization of cytoskeletal F-actin and tight junctional ZO-1. Necessary for hypotonicity-induced Ca(2+) entry and subsequent activation of volume-sensitive organic osmolyte/anion channels (VSOAC) in cervical cancer cells. The chain is Myosin light chain kinase, smooth muscle from Mus musculus (Mouse).